The sequence spans 39 residues: Omega-theraphotoxin-Bs1b (39 aa).

3 cysteine pairs are disulfide-bonded: cysteine 4–cysteine 25, cysteine 8–cysteine 31, and cysteine 17–cysteine 36.

The protein belongs to the neurotoxin 12 (Hwtx-2) family. 06 (TXP1) subfamily. As to expression, expressed by the venom gland.

Its subcellular location is the secreted. Inhibits voltage-gated calcium channels (Cav) in rat cerebellar granule cells. Has insecticidal activity. The protein is Omega-theraphotoxin-Bs1b of Brachypelma smithi (Mexican red knee tarantula).